The primary structure comprises 110 residues: Large ribosomal subunit protein uL22 (110 aa).

It belongs to the universal ribosomal protein uL22 family. As to quaternary structure, part of the 50S ribosomal subunit.

This protein binds specifically to 23S rRNA; its binding is stimulated by other ribosomal proteins, e.g. L4, L17, and L20. It is important during the early stages of 50S assembly. It makes multiple contacts with different domains of the 23S rRNA in the assembled 50S subunit and ribosome. In terms of biological role, the globular domain of the protein is located near the polypeptide exit tunnel on the outside of the subunit, while an extended beta-hairpin is found that lines the wall of the exit tunnel in the center of the 70S ribosome. In Cellvibrio japonicus (strain Ueda107) (Pseudomonas fluorescens subsp. cellulosa), this protein is Large ribosomal subunit protein uL22.